Reading from the N-terminus, the 155-residue chain is Ribosomal RNA large subunit methyltransferase H (155 aa).

S-adenosyl-L-methionine-binding positions include Leu-73, Gly-104, and 123 to 128; that span reads LSALTL.

This sequence belongs to the RNA methyltransferase RlmH family. In terms of assembly, homodimer.

The protein resides in the cytoplasm. The catalysed reaction is pseudouridine(1915) in 23S rRNA + S-adenosyl-L-methionine = N(3)-methylpseudouridine(1915) in 23S rRNA + S-adenosyl-L-homocysteine + H(+). Functionally, specifically methylates the pseudouridine at position 1915 (m3Psi1915) in 23S rRNA. The chain is Ribosomal RNA large subunit methyltransferase H from Saccharophagus degradans (strain 2-40 / ATCC 43961 / DSM 17024).